Here is a 340-residue protein sequence, read N- to C-terminus: Protein RecA (340 aa).

66 to 73 (GPESSGKT) serves as a coordination point for ATP.

The protein belongs to the RecA family.

Its subcellular location is the cytoplasm. Its function is as follows. Can catalyze the hydrolysis of ATP in the presence of single-stranded DNA, the ATP-dependent uptake of single-stranded DNA by duplex DNA, and the ATP-dependent hybridization of homologous single-stranded DNAs. It interacts with LexA causing its activation and leading to its autocatalytic cleavage. The sequence is that of Protein RecA from Rickettsia prowazekii (strain Madrid E).